The primary structure comprises 452 residues: Adenylosuccinate synthetase 2 (452 aa).

GTP-binding positions include G19 to R25 and G47 to T49. The active-site Proton acceptor is D20. Mg(2+) is bound by residues D20 and G47. Residues D20–K23, N45–H48, T131, R145, Q223, T238, and R338 contribute to the IMP site. H48 (proton donor) is an active-site residue. T334–R340 provides a ligand contact to substrate. Residues R340, K366–D368, and G437–G439 contribute to the GTP site.

This sequence belongs to the adenylosuccinate synthetase family. In terms of assembly, homodimer. Mg(2+) is required as a cofactor.

It localises to the cytoplasm. The enzyme catalyses IMP + L-aspartate + GTP = N(6)-(1,2-dicarboxyethyl)-AMP + GDP + phosphate + 2 H(+). The protein operates within purine metabolism; AMP biosynthesis via de novo pathway; AMP from IMP: step 1/2. Its function is as follows. Plays an important role in the de novo pathway of purine nucleotide biosynthesis. Catalyzes the first committed step in the biosynthesis of AMP from IMP. This is Adenylosuccinate synthetase 2 from Cupriavidus pinatubonensis (strain JMP 134 / LMG 1197) (Cupriavidus necator (strain JMP 134)).